Consider the following 4924-residue polypeptide: Hydroxamate-type ferrichrome siderophore peptide synthetase (4924 aa).

4 Carrier domains span residues asparagine 715–lysine 791, aspartate 2172–arginine 2246, asparagine 3254–threonine 3328, and isoleucine 4402–lysine 4478. Serine 752, serine 2206, serine 3288, and serine 4439 each carry O-(pantetheine 4'-phosphoryl)serine.

This sequence belongs to the ATP-dependent AMP-binding enzyme family.

The protein resides in the cytoplasm. Functionally, involved in intracellular and extracellular ferrichrome siderophore biosynthesis. The polypeptide is Hydroxamate-type ferrichrome siderophore peptide synthetase (sib1) (Schizosaccharomyces pombe (strain 972 / ATCC 24843) (Fission yeast)).